We begin with the raw amino-acid sequence, 908 residues long: DNA mismatch repair protein MutS (908 aa).

Position 662 to 669 (glycine 662 to serine 669) interacts with ATP.

This sequence belongs to the DNA mismatch repair MutS family.

Its function is as follows. This protein is involved in the repair of mismatches in DNA. It is possible that it carries out the mismatch recognition step. This protein has a weak ATPase activity. This Rhizobium etli (strain ATCC 51251 / DSM 11541 / JCM 21823 / NBRC 15573 / CFN 42) protein is DNA mismatch repair protein MutS.